A 1470-amino-acid chain; its full sequence is Histone acetyltransferase HAC4 (1470 aa).

Residues 1-10 (MNNNKEVPQN) show a composition bias toward polar residues. Disordered stretches follow at residues 1 to 20 (MNNNKEVPQNSVAVSSSSSA) and 342 to 376 (TNFQSAPNNRDNLPQVSQQLSNHGSRQHRGQHSQN). The span at 11-20 (SVAVSSSSSA) shows a compositional bias: low complexity. Residues 342–365 (TNFQSAPNNRDNLPQVSQQLSNHG) are compositionally biased toward polar residues. Residues 416–495 (GQTSSNTVLR…SISCRTCVAV (80 aa)) form a TAZ-type 1 zinc finger. The tract at residues 518-566 (SSKCQPKKSSKSRQAYKKGGAEAPSVDADLQRSIKRPKLHRPSQNITPE) is disordered. A compositionally biased stretch (basic residues) spans 522 to 533 (QPKKSSKSRQAY). The PHD-type zinc-finger motif lies at 764–841 (HYVCAPCYNE…KYTCPSCYIQ (78 aa)). Positions 856–1293 (VPGATSLPVT…ILYHLHNPTA (438 aa)) constitute a CBP/p300-type HAT domain. Acetyl-CoA contacts are provided by residues 979-981 (LDS), 998-999 (RT), and Trp-1054. ZZ-type zinc fingers lie at residues 1175 to 1238 (HLQH…IKDV) and 1295 to 1347 (AFAT…SSTD). Positions 1180, 1183, 1195, 1198, 1204, 1207, 1220, 1228, 1300, 1303, 1315, 1318, 1324, 1327, 1335, and 1337 each coordinate Zn(2+). A TAZ-type 2 zinc finger spans residues 1358 to 1436 (SQSYQVKLEK…KCTVPKCSGL (79 aa)).

In terms of tissue distribution, rosette leaves, stems and flowers.

It localises to the nucleus. It catalyses the reaction L-lysyl-[protein] + acetyl-CoA = N(6)-acetyl-L-lysyl-[protein] + CoA + H(+). Acetyltransferase enzyme. Acetylates histones, giving a specific tag for transcriptional activation. In Arabidopsis thaliana (Mouse-ear cress), this protein is Histone acetyltransferase HAC4 (HAC4).